The following is a 416-amino-acid chain: Phosphoribosylamine--glycine ligase (416 aa).

One can recognise an ATP-grasp domain in the interval 107–313 (KDFMKKYNVK…FVDLINAAMD (207 aa)). 133-194 (LKKCTYPIVI…EEYLEGVEAS (62 aa)) serves as a coordination point for ATP. Positions 283 and 285 each coordinate Mg(2+).

The protein belongs to the GARS family. It depends on Mg(2+) as a cofactor. Requires Mn(2+) as cofactor.

It catalyses the reaction 5-phospho-beta-D-ribosylamine + glycine + ATP = N(1)-(5-phospho-beta-D-ribosyl)glycinamide + ADP + phosphate + H(+). The protein operates within purine metabolism; IMP biosynthesis via de novo pathway; N(1)-(5-phospho-D-ribosyl)glycinamide from 5-phospho-alpha-D-ribose 1-diphosphate: step 2/2. The chain is Phosphoribosylamine--glycine ligase from Clostridium acetobutylicum (strain ATCC 824 / DSM 792 / JCM 1419 / IAM 19013 / LMG 5710 / NBRC 13948 / NRRL B-527 / VKM B-1787 / 2291 / W).